The following is a 162-amino-acid chain: Allantoicase (162 aa).

It belongs to the allantoicase family. Homohexamer. As to expression, expressed in zygote.

The catalysed reaction is allantoate + H2O = (S)-ureidoglycolate + urea. Its pathway is nitrogen metabolism; (S)-allantoin degradation; (S)-ureidoglycolate from allantoate (aminidohydrolase route): step 1/1. In terms of biological role, catalyzes the degradation of allantoate to (-)-ureidoglycolate and (+)-ureidoglycolate to glyoxylate. The sequence is that of Allantoicase from Chlamydomonas reinhardtii (Chlamydomonas smithii).